Here is a 464-residue protein sequence, read N- to C-terminus: Protein FAM90A10 (464 aa).

Disordered regions lie at residues 1–42 (MMAR…DPRL), 69–373 (VPAT…LPTA), and 415–437 (HSPE…SEAP). Basic and acidic residues-rich tracts occupy residues 74–89 (GKKE…KPRG) and 97–114 (NKDK…DPQR). A compositionally biased stretch (low complexity) spans 180–197 (LASLSPLRKASLSSSSSL).

It belongs to the FAM90 family.

This Homo sapiens (Human) protein is Protein FAM90A10 (FAM90A10).